The primary structure comprises 766 residues: Oligopeptide transporter 7 (766 aa).

Residues 1–58 form a disordered region; sequence MEESEQVLPLLTNPKDLTNPSYASSSSSSSEPRDETEDLLLPISDENEEEEEENSPIR. Residues 45–54 are compositionally biased toward acidic residues; that stretch reads DENEEEEEEN. 15 helical membrane-spanning segments follow: residues 79-99, 104-124, 154-174, 184-204, 247-267, 287-307, 324-344, 390-410, 446-466, 477-497, 509-529, 561-581, 627-647, 676-696, and 709-729; these read MWVLGTLSCILLSFLNQFFWY, LTISAISAQIAVVPLGRLMAA, ITIFANAGAGSVYAIHVVTVV, FFVSFIVIVTTQVLGFGWAGI, FVIAFVCSFAYYVFPGYLFQI, IGSGLHGLGVGAIGLDWSTIS, VGVGFVLVIYVLVPICYWLDV, LCTFFAISYGVGFAALSATIM, VPEWWFWCILVTNVGATIFAC, WWGVLLACTVAIIFTLPIGII, IITEYIIGYIYPGYPVANMCF, FMAQIVGTLISCFVYLTTAWW, LYKSVNWFFLVGAIAPILVWL, ATAVNYTTWVLAGFLSGFVVF, and VLSGALDAGLAFMGVLLYMCL.

It belongs to the oligopeptide OPT transporter (TC 2.A.67.1) family. Expressed in the major and the first-order veins and in the hydathodes of the leaves. In the roots, expressed in circular zones surrounding lateral root primordia and in some part of the root epidermis. Expressed also in the sepals and the cortical tissues of the stem, but not in the conducting bundles, the petals or the reproductive tissues.

It is found in the membrane. Its function is as follows. Involved in the translocation of tetra- and pentapeptides across the cellular membrane in an energy-dependent manner. May also transport cadmium complexes. The polypeptide is Oligopeptide transporter 7 (OPT7) (Arabidopsis thaliana (Mouse-ear cress)).